A 127-amino-acid polypeptide reads, in one-letter code: Large ribosomal subunit protein eL8 (127 aa).

The protein belongs to the eukaryotic ribosomal protein eL8 family. As to quaternary structure, part of the 50S ribosomal subunit. Probably part of the RNase P complex.

It localises to the cytoplasm. In terms of biological role, multifunctional RNA-binding protein that recognizes the K-turn motif in ribosomal RNA, the RNA component of RNase P, box H/ACA, box C/D and box C'/D' sRNAs. This chain is Large ribosomal subunit protein eL8, found in Aeropyrum pernix (strain ATCC 700893 / DSM 11879 / JCM 9820 / NBRC 100138 / K1).